We begin with the raw amino-acid sequence, 155 residues long: Small ribosomal subunit protein uS7 (155 aa).

The protein belongs to the universal ribosomal protein uS7 family. As to quaternary structure, part of the 30S ribosomal subunit. Contacts proteins S9 and S11.

Functionally, one of the primary rRNA binding proteins, it binds directly to 16S rRNA where it nucleates assembly of the head domain of the 30S subunit. Is located at the subunit interface close to the decoding center, probably blocks exit of the E-site tRNA. The polypeptide is Small ribosomal subunit protein uS7 (Thioalkalivibrio sulfidiphilus (strain HL-EbGR7)).